The primary structure comprises 446 residues: Ubiquitin carboxyl-terminal hydrolase MINDY-3 (446 aa).

Catalysis depends on Cys-51, which acts as the Nucleophile. Residues 117–128 (DNSDITDSHPEP) are compositionally biased toward basic and acidic residues. The tract at residues 117–137 (DNSDITDSHPEPESSQPTDTP) is disordered. The active-site Proton acceptor is His-288.

It belongs to the MINDY deubiquitinase family. FAM188 subfamily.

Its subcellular location is the nucleus. It catalyses the reaction Thiol-dependent hydrolysis of ester, thioester, amide, peptide and isopeptide bonds formed by the C-terminal Gly of ubiquitin (a 76-residue protein attached to proteins as an intracellular targeting signal).. Functionally, hydrolase that can remove 'Lys-48'-linked conjugated ubiquitin from proteins. In Danio rerio (Zebrafish), this protein is Ubiquitin carboxyl-terminal hydrolase MINDY-3 (mindy3).